The following is a 205-amino-acid chain: Thymidylate kinase (205 aa).

Position 10–17 (10–17 (GIDGAGKT)) interacts with ATP.

This sequence belongs to the thymidylate kinase family.

It catalyses the reaction dTMP + ATP = dTDP + ADP. In terms of biological role, phosphorylation of dTMP to form dTDP in both de novo and salvage pathways of dTTP synthesis. This is Thymidylate kinase from Nitrosospira multiformis (strain ATCC 25196 / NCIMB 11849 / C 71).